The chain runs to 275 residues: Alpha carbonic anhydrase 7 (275 aa).

An N-terminal signal peptide occupies residues 1–27 (MVNYSSISCIFFVALFSIFTIVSISSA). N-linked (GlcNAc...) asparagine glycosylation is found at Asn3 and Asn96. The Alpha-carbonic anhydrase domain maps to 38 to 272 (REFNYKKNDE…TNKRIVHLYR (235 aa)). A disulfide bridge connects residues Cys63 and Cys222. His104 (proton acceptor) is an active-site residue. Zn(2+)-binding residues include His130, His132, and His149. Substrate is bound at residue 218–219 (TT). Asn225 is a glycosylation site (N-linked (GlcNAc...) asparagine).

It belongs to the alpha-class carbonic anhydrase family. Zn(2+) is required as a cofactor. N-glycosylated.

It localises to the plastid. The protein resides in the chloroplast stroma. It carries out the reaction hydrogencarbonate + H(+) = CO2 + H2O. Reversible hydration of carbon dioxide. The chain is Alpha carbonic anhydrase 7 (ACA7) from Arabidopsis thaliana (Mouse-ear cress).